Consider the following 453-residue polypeptide: Crh-like protein CRH11 (453 aa).

The N-terminal stretch at 1–21 (MKFTTLATIASTLLFAANANA) is a signal peptide. A disulfide bond links Cys24 and Cys32. In terms of domain architecture, GH16 spans 28–227 (KSSDCSPVPA…WAGGITDYSQ (200 aa)). The Nucleophile role is filled by Glu119. Glu123 (proton donor) is an active-site residue. Chitin contacts are provided by Glu123, Trp204, and Thr215. Disordered regions lie at residues 281 to 343 (LESG…SEKS), 362 to 397 (KTTV…PASA), and 410 to 430 (GDAA…TENN). Composition is skewed to low complexity over residues 286 to 343 (SVDS…SEKS), 363 to 397 (TTVT…PASA), and 412 to 425 (AAPS…PSVS). Asn290 carries an N-linked (GlcNAc...) asparagine glycan. Asn430 carries GPI-anchor amidated asparagine lipidation. Residues 431–453 (GAVSVAKTTSLFGFVALIGFLFV) constitute a propeptide, removed in mature form.

Belongs to the glycosyl hydrolase 16 family. CRH1 subfamily. In terms of processing, the GPI-anchor is attached to the protein in the endoplasmic reticulum and serves to target the protein to the cell surface. There, the glucosamine-inositol phospholipid moiety is cleaved off and the GPI-modified mannoprotein is covalently attached via its lipidless GPI glycan remnant to the 1,6-beta-glucan of the outer cell wall layer.

Its subcellular location is the secreted. The protein resides in the cell wall. The protein localises to the membrane. The enzyme catalyses Random endo-hydrolysis of N-acetyl-beta-D-glucosaminide (1-&gt;4)-beta-linkages in chitin and chitodextrins.. Functionally, dual chitinase/transglycosylase that plays a role in cell wall architecture. Chitinase and transglycosylase activities are coupled. Required for the polysaccharide cross-linking at the septa and the cell wall. More specifically, transfers chitin to 1,6-beta-glucan in the cell wall. Plays an important role in fungal pathogenesis via its functions in cell wall assembly and regeneration, filamentation, and adherence to host cells. This chain is Crh-like protein CRH11 (CRH11), found in Candida albicans (strain SC5314 / ATCC MYA-2876) (Yeast).